The primary structure comprises 355 residues: UDP-N-acetylglucosamine--N-acetylmuramyl-(pentapeptide) pyrophosphoryl-undecaprenol N-acetylglucosamine transferase (355 aa).

Residues 15-17 (TGG), N127, R163, S191, I244, 263-268 (ALTVSE), and Q288 contribute to the UDP-N-acetyl-alpha-D-glucosamine site.

The protein belongs to the glycosyltransferase 28 family. MurG subfamily.

It localises to the cell inner membrane. It carries out the reaction di-trans,octa-cis-undecaprenyl diphospho-N-acetyl-alpha-D-muramoyl-L-alanyl-D-glutamyl-meso-2,6-diaminopimeloyl-D-alanyl-D-alanine + UDP-N-acetyl-alpha-D-glucosamine = di-trans,octa-cis-undecaprenyl diphospho-[N-acetyl-alpha-D-glucosaminyl-(1-&gt;4)]-N-acetyl-alpha-D-muramoyl-L-alanyl-D-glutamyl-meso-2,6-diaminopimeloyl-D-alanyl-D-alanine + UDP + H(+). It functions in the pathway cell wall biogenesis; peptidoglycan biosynthesis. Cell wall formation. Catalyzes the transfer of a GlcNAc subunit on undecaprenyl-pyrophosphoryl-MurNAc-pentapeptide (lipid intermediate I) to form undecaprenyl-pyrophosphoryl-MurNAc-(pentapeptide)GlcNAc (lipid intermediate II). This chain is UDP-N-acetylglucosamine--N-acetylmuramyl-(pentapeptide) pyrophosphoryl-undecaprenol N-acetylglucosamine transferase, found in Escherichia coli O139:H28 (strain E24377A / ETEC).